We begin with the raw amino-acid sequence, 473 residues long: Photosystem II CP43 reaction center protein (473 aa).

A propeptide spanning residues 1–14 is cleaved from the precursor; sequence MKTLYSLRRFYPVE. Threonine 15 carries the N-acetylthreonine modification. Threonine 15 is subject to Phosphothreonine. A run of 5 helical transmembrane segments spans residues 69–93, 134–155, 178–200, 255–275, and 291–312; these read LFEV…PHLA, LLGP…KDRN, KALY…RRIT, KPFA…LSYS, and WFNN…ASQA. Glutamate 367 is a binding site for [CaMn4O5] cluster. A helical transmembrane segment spans residues 447–471; it reads RARAAAAGFEKGIDRDFEPVLFMTP.

Belongs to the PsbB/PsbC family. PsbC subfamily. PSII is composed of 1 copy each of membrane proteins PsbA, PsbB, PsbC, PsbD, PsbE, PsbF, PsbH, PsbI, PsbJ, PsbK, PsbL, PsbM, PsbT, PsbX, PsbY, PsbZ, Psb30/Ycf12, at least 3 peripheral proteins of the oxygen-evolving complex and a large number of cofactors. It forms dimeric complexes. It depends on Binds multiple chlorophylls and provides some of the ligands for the Ca-4Mn-5O cluster of the oxygen-evolving complex. It may also provide a ligand for a Cl- that is required for oxygen evolution. PSII binds additional chlorophylls, carotenoids and specific lipids. as a cofactor.

The protein resides in the plastid. The protein localises to the chloroplast thylakoid membrane. Functionally, one of the components of the core complex of photosystem II (PSII). It binds chlorophyll and helps catalyze the primary light-induced photochemical processes of PSII. PSII is a light-driven water:plastoquinone oxidoreductase, using light energy to abstract electrons from H(2)O, generating O(2) and a proton gradient subsequently used for ATP formation. The sequence is that of Photosystem II CP43 reaction center protein from Nuphar advena (Common spatterdock).